The primary structure comprises 473 residues: Microtubule-binding protein TANGLED (473 aa).

Positions 1 to 132 (MVARTPQKQR…VTRDIVDAIA (132 aa)) are required for binding to TAN and location to the cortical division sites (CDS) during cytokinesis. 2 disordered regions span residues 131–218 (IAPK…ENSF) and 290–354 (ASKF…LSTA). Composition is skewed to polar residues over residues 205–216 (ISPQVKGNNGEN) and 307–329 (PTRNGSNSVRKSPRGSRSPTRTV).

As to quaternary structure, interacts with POK1. In terms of tissue distribution, strongly expressed in flower buds and root tips.

Its subcellular location is the nucleus. The protein resides in the nucleolus. It localises to the cytoplasm. The protein localises to the cytoskeleton. It is found in the phragmoplast. In terms of biological role, is required for spatial control cell division during plant development. Through an association with microtubules, acts both for the positioning of cytoskeletal arrays that establish planes of cell division during prophase and for spatial guidance of expanding phragmoplasts toward preestablished cortical division sites (CDS) during cytokinesis. This Arabidopsis thaliana (Mouse-ear cress) protein is Microtubule-binding protein TANGLED (TAN).